We begin with the raw amino-acid sequence, 88 residues long: Small ribosomal subunit protein bS20 (88 aa).

The interval 1–25 (MANSAQARKRARQATKARAHNASLR) is disordered. Over residues 7-19 (ARKRARQATKARA) the composition is skewed to basic residues.

It belongs to the bacterial ribosomal protein bS20 family.

In terms of biological role, binds directly to 16S ribosomal RNA. The chain is Small ribosomal subunit protein bS20 from Azoarcus sp. (strain BH72).